The chain runs to 490 residues: Endoglucanase 13 (490 aa).

The N-terminal stretch at 1-26 (MSQLKNGSSQCLWTSICIVLIVMSMA) is a signal peptide. N6 is a glycosylation site (N-linked (GlcNAc...) asparagine). D86 (nucleophile) is an active-site residue. Residues H412, D464, and E473 contribute to the active site.

This sequence belongs to the glycosyl hydrolase 9 (cellulase E) family.

It is found in the secreted. The catalysed reaction is Endohydrolysis of (1-&gt;4)-beta-D-glucosidic linkages in cellulose, lichenin and cereal beta-D-glucans.. The chain is Endoglucanase 13 from Arabidopsis thaliana (Mouse-ear cress).